The primary structure comprises 732 residues: Segment polarity protein dishevelled homolog DVL-2 (732 aa).

The region spanning Met-1–Glu-82 is the DIX domain. 2 disordered regions span residues Ser-81 to Thr-181 and Glu-195 to Ser-237. Residues Asp-98 to Ala-111 show a composition bias toward pro residues. Residues Met-146–Thr-157 are compositionally biased toward basic and acidic residues. The span at Arg-202–Ser-213 shows a compositional bias: polar residues. Basic residues predominate over residues Leu-215–Pro-227. The PDZ domain maps to Thr-250–Ala-335. Residues Pro-424–Asp-498 form the DEP domain. Low complexity-rich tracts occupy residues Met-570–Ser-589, Lys-612–Arg-629, and Pro-637–Pro-647. The disordered stretch occupies residues Met-570 to Ala-660.

This sequence belongs to the DSH family. As to quaternary structure, can form homomultimers. Interacts with prickle1. Interacts (via the PDZ domain) with ccdc88c/dal and dact1-B/dpr. Interacts (via the DIX domain) with ARP/Axin-related protein and dact1-A/frodo. Interacts with sdc4, possibly via fz7. Interacts directly (via the DEP domain) with efnb1/ephrin-B1. May interact indirectly with the phosphorylated ephrin receptors ephb1 and ephb2 via SH domain-containing adapters. In terms of processing, phosphorylated. Phosphorylation is controlled by frizzled proteins, correlates with the onset of embryo dorsalizing events and is higher in the dorsal half of early cleavage embryos. Phosphorylated on tyrosine residues in response to association with efnb1/ephrin-B1.

It localises to the cytoplasm. Its subcellular location is the cytoplasmic vesicle. The protein localises to the cell projection. It is found in the cilium. The protein resides in the nucleus. It localises to the cell membrane. Its function is as follows. Involved in at least 2 independent signaling cascades, controlling cell fate via canonical Wnt signaling and cell polarity via a planar cell polarity (PCP) cascade. Acts synergistically with dal/dapple-like to activate Wnt signaling, stabilizing ctnnb1/beta-catenin and leading to dorsal axis formation. Also prevents degradation of ctnnb1/beta-catenin by displacing gsk3 from a complex with ARP/Axin-related protein. Has an additional role in anterior-posterior (A/P) axis formation, specifying different neuroectodermal cell fates along the A/P axis in a dose-dependent manner by activating several early patterning genes. In the PCP pathway, required at the cell membrane for PCP-mediated neural and mesodermal convergent extension during gastrulation and subsequent neural tube closure, acting to activate jnk. Also involved in blastopore closure and archenteron elongation during early, but not late, gastrulation. Associates with ephrin receptors and ligands and acts as part of a downstream PCP pathway to mediate ephrin-mediated cell repulsion via activation of rhoa. Required for efnb1/ephrin-B1-driven movement of non-retinal progenitor cells into the retina during eye field formation. Patterns the hindbrain. Required for ciliogenesis. Controls the docking of basal bodies to the apical plasma membrane; mediates the activation, but not localization of rhoa at the apical surface of ciliated cells during basal body docking. Furthermore, required for the association of basal bodies with membrane-bound vesicles and the vesicle-trafficking protein exoc4/sec8, and this association is in turn required for basal body docking. Once basal bodies are docked, required for the planar polarization of basal bodies that underlies ciliary beating and the directional fluid flow across ciliated epithelia. This Xenopus tropicalis (Western clawed frog) protein is Segment polarity protein dishevelled homolog DVL-2.